We begin with the raw amino-acid sequence, 184 residues long: Photosystem I assembly protein Ycf4 (184 aa).

A run of 2 helical transmembrane segments spans residues 22 to 42 (FCWA…GTSS) and 57 to 77 (ILFF…LFIS).

It belongs to the Ycf4 family.

Its subcellular location is the plastid. It localises to the chloroplast thylakoid membrane. Functionally, seems to be required for the assembly of the photosystem I complex. This chain is Photosystem I assembly protein Ycf4, found in Phalaenopsis aphrodite subsp. formosana (Moth orchid).